The primary structure comprises 460 residues: Nucleosome assembly protein 1-like 2 (460 aa).

Residues 1–11 are compositionally biased toward basic and acidic residues; it reads MAESVDHKELS. 2 disordered regions span residues 1-87 and 213-238; these read MAES…DSDR and DEEEEEEEDDSAGATGGEEVNEEDPK. The segment covering 213–223 has biased composition (acidic residues); the sequence is DEEEEEEEDDS. Residues 346-352 carry the Nuclear localization signal motif; that stretch reads IKKKQRH.

Belongs to the nucleosome assembly protein (NAP) family. As to expression, brain, specifically expressed in neurons.

It is found in the nucleus. Its function is as follows. Acidic protein which may be involved in interactions with other proteins or DNA. This Mus musculus (Mouse) protein is Nucleosome assembly protein 1-like 2 (Nap1l2).